The chain runs to 384 residues: Lipoyl synthase 2, chloroplastic (384 aa).

The N-terminal 48 residues, 1–48 (MAAYCSRVYHHHPVSPSTMQGSLARPSIHAGSASLTFRARPNSVSIVR), are a transit peptide targeting the chloroplast. Cys-108, Cys-113, Cys-119, Cys-145, Cys-149, Cys-152, and Ser-360 together coordinate [4Fe-4S] cluster. The 222-residue stretch at 128–349 (GDGDGIATAT…KEYGESLGFL (222 aa)) folds into the Radical SAM core domain.

This sequence belongs to the radical SAM superfamily. Lipoyl synthase family. The cofactor is [4Fe-4S] cluster.

Its subcellular location is the plastid. It is found in the chloroplast. The enzyme catalyses [[Fe-S] cluster scaffold protein carrying a second [4Fe-4S](2+) cluster] + N(6)-octanoyl-L-lysyl-[protein] + 2 oxidized [2Fe-2S]-[ferredoxin] + 2 S-adenosyl-L-methionine + 4 H(+) = [[Fe-S] cluster scaffold protein] + N(6)-[(R)-dihydrolipoyl]-L-lysyl-[protein] + 4 Fe(3+) + 2 hydrogen sulfide + 2 5'-deoxyadenosine + 2 L-methionine + 2 reduced [2Fe-2S]-[ferredoxin]. The protein operates within protein modification; protein lipoylation via endogenous pathway; protein N(6)-(lipoyl)lysine from octanoyl-[acyl-carrier-protein]: step 2/2. Catalyzes the radical-mediated insertion of two sulfur atoms into the C-6 and C-8 positions of the octanoyl moiety bound to the lipoyl domains of lipoate-dependent enzymes, thereby converting the octanoylated domains into lipoylated derivatives. The polypeptide is Lipoyl synthase 2, chloroplastic (Oryza sativa subsp. indica (Rice)).